A 125-amino-acid polypeptide reads, in one-letter code: Small ribosomal subunit protein eS6 (125 aa).

It belongs to the eukaryotic ribosomal protein eS6 family.

The protein is Small ribosomal subunit protein eS6 of Thermococcus onnurineus (strain NA1).